A 475-amino-acid chain; its full sequence is TOM1-like protein 1 (475 aa).

The VHS domain maps to 22–154 (ATFAGVQTED…DLLKKGVQFP (133 aa)). Residues 155 to 175 (PLDGEPETKQEAGQISPSRPT) form a disordered region. Positions 165–175 (EAGQISPSRPT) are enriched in polar residues. Position 170 is a phosphoserine (Ser-170). The 89-residue stretch at 199–287 (EQIGKLHSEL…AILGYERFTR (89 aa)) folds into the GAT domain. The interval 296-317 (KRNPTEANQTSSEPSAPSCDLL) is disordered. Positions 300-310 (TEANQTSSEPS) are enriched in polar residues. Ser-313 is modified (phosphoserine). The interval 392-395 (YDNF) is interaction with GRB2. Residues 421-425 (LPPLP) carry the SH3-binding motif. Residues 442–445 (YEVM) are interaction with PIK3R1. Tyr-458 carries the phosphotyrosine modification. The SH2-binding signature appears at 458–461 (YEEI).

The protein belongs to the TOM1 family. As to quaternary structure, interacts with the SH2 and SH3 domains of FYN when phosphorylated. Also interacts with GRB2 and PIK3R1 when phosphorylated. Interacts with LYN. Phosphorylated on tyrosines by FYN and LYN.

It localises to the golgi apparatus. Its subcellular location is the golgi stack. The protein localises to the endosome membrane. It is found in the cytoplasm. The protein resides in the membrane. Probable adapter protein involved in signaling pathways. Interacts with the SH2 and SH3 domains of various signaling proteins when it is phosphorylated. May promote FYN activation, possibly by disrupting intramolecular SH3-dependent interactions. This is TOM1-like protein 1 (Tom1l1) from Rattus norvegicus (Rat).